The primary structure comprises 136 residues: Membrane-bound negative regulator YvrL (136 aa).

A run of 4 helical transmembrane segments spans residues 18-38, 46-66, 83-103, and 106-126; these read LLAAAAVVLTYFAVIYILFSL, AAHVLLFAVVFLVLGLCFEPF, LFILLAGIVQLLFLWMTAHTT, and LISDIWLSTTEEMIVAAVFLI.

It is found in the cell membrane. Functionally, negatively regulates RNA polymerase sigma factor SigO-dependent transcription. Prevents the expression or secretion of OxdC under nonstress conditions. May act as an anti-sigma factor. The protein is Membrane-bound negative regulator YvrL (yvrL) of Bacillus subtilis (strain 168).